The sequence spans 249 residues: Type I iodothyronine deiodinase (249 aa).

Over Met1–Arg12 the chain is Extracellular. The chain crosses the membrane as a helical; Signal-anchor for type III membrane protein span at residues Leu13–Phe33. At Pro34–Ser249 the chain is on the cytoplasmic side. The active site involves Sec126. Sec126 is a non-standard amino acid (selenocysteine).

The protein belongs to the iodothyronine deiodinase family. Predominantly monomer. Can form homodimers but homodimerization is not essential for enzyme activity.

The protein resides in the cell membrane. It is found in the endoplasmic reticulum membrane. The protein localises to the basolateral cell membrane. It catalyses the reaction 3,3',5-triiodo-L-thyronine + iodide + A + H(+) = L-thyroxine + AH2. The catalysed reaction is 3,3',5'-triiodo-L-thyronine + iodide + A + H(+) = L-thyroxine + AH2. It carries out the reaction 3,3'-diiodo-L-thyronine + iodide + A + H(+) = 3,3',5'-triiodo-L-thyronine + AH2. The enzyme catalyses 3,3'-diiodo-L-thyronine + iodide + A + H(+) = 3,3',5-triiodo-L-thyronine + AH2. It catalyses the reaction 3'-iodo-L-thyronine + iodide + A + H(+) = 3',5'-diiodo-L-thyronine + AH2. The catalysed reaction is 3-iodo-L-thyronine + iodide + A + H(+) = 3,5-diiodo-L-thyronine + AH2. It carries out the reaction 3-iodo-L-thyronine + iodide + A + H(+) = 3,3'-diiodo-L-thyronine + AH2. The enzyme catalyses 3,3'-diiodothyronamine + iodide + A + H(+) = 3,3',5'-triiodothyronamine + AH2. It catalyses the reaction 3'-iodothyronamine + iodide + A + H(+) = 3',5'-diiodothyronamine + AH2. The catalysed reaction is 3-iodothyronamine + iodide + A + H(+) = 3,3'-diiodothyronamine + AH2. It carries out the reaction 3,3'-diiodothyronamine + iodide + A + H(+) = 3,3',5-triiodothyronamine + AH2. The enzyme catalyses 3-iodothyronamine + iodide + A + H(+) = 3,5-diiodothyronamine + AH2. It catalyses the reaction 3,3'-diiodo-L-thyronine sulfate + iodide + A + H(+) = 3,3',5'-triiodo-L-thyronine sulfate + AH2. The catalysed reaction is 3,3',5'-triiodo-L-thyronine sulfate + iodide + A + H(+) = L-thyroxine sulfate + AH2. It carries out the reaction 3,3'-diiodo-L-thyronine sulfate + iodide + A + H(+) = 3,3',5-triiodo-L-thyronine sulfate + AH2. Its function is as follows. Plays a crucial role in the metabolism of thyroid hormones (TH) and has specific roles in TH activation and inactivation by deiodination. Catalyzes the deiodination of L-thyroxine (T4) to 3,5,3'-triiodothyronine (T3) via outer-ring deiodination (ORD) and of T4 to 3,3',5'-triiodothyronine (rT3) via inner-ring deiodination (IRD). Catalyzes the deiodiantion of rT3 to 3,3'-diiodothyronine (3,3'-T2) and 3',5'-diiodothyronine (3',5'-T2) to 3'-monoiodothyronine (3'-T1) via ORD. Catalyzes the deiodination of T3 to 3,3'-T2, 3,5-diiodothyronine (3,5-T2) to 3-monoiodothyronine (3-T1) and 3,3'-T2 to 3-T1 via IRD. Catalyzes the phenolic ring deiodinations of 3,3',5'-triiodothyronamine, 3',5'-diiodothyronamine and 3,3'-diiodothyronamine as well as tyrosyl ring deiodinations of 3,5,3'-triiodothyronamine and 3,5-diiodothyronamine. Catalyzes the deiodination of L-thyroxine sulfate and 3,3',5-triiodo-L-thyronine sulfate via IRD and of 3,3',5'-triiodo-L-thyronine sulfate via ORD. The chain is Type I iodothyronine deiodinase (DIO1) from Oryctolagus cuniculus (Rabbit).